Consider the following 230-residue polypeptide: Small ribosomal subunit protein uS3c (230 aa).

A KH type-2 domain is found at 39–109 (IRSFIHGKLS…QIRVNVVEIS (71 aa)).

Belongs to the universal ribosomal protein uS3 family. As to quaternary structure, part of the 30S ribosomal subunit.

It is found in the plastid. Its subcellular location is the chloroplast. This is Small ribosomal subunit protein uS3c (rps3) from Porphyra purpurea (Red seaweed).